Reading from the N-terminus, the 185-residue chain is Ribosome-recycling factor (185 aa).

This sequence belongs to the RRF family.

The protein localises to the cytoplasm. Responsible for the release of ribosomes from messenger RNA at the termination of protein biosynthesis. May increase the efficiency of translation by recycling ribosomes from one round of translation to another. The protein is Ribosome-recycling factor of Streptococcus gordonii (strain Challis / ATCC 35105 / BCRC 15272 / CH1 / DL1 / V288).